The primary structure comprises 302 residues: 33 kDa chaperonin (302 aa).

Disulfide bonds link C240–C242 and C273–C276.

Belongs to the HSP33 family. Under oxidizing conditions two disulfide bonds are formed involving the reactive cysteines. Under reducing conditions zinc is bound to the reactive cysteines and the protein is inactive.

Its subcellular location is the cytoplasm. Redox regulated molecular chaperone. Protects both thermally unfolding and oxidatively damaged proteins from irreversible aggregation. Plays an important role in the bacterial defense system toward oxidative stress. This chain is 33 kDa chaperonin, found in Synechocystis sp. (strain ATCC 27184 / PCC 6803 / Kazusa).